Here is a 295-residue protein sequence, read N- to C-terminus: MNTNHIRQVVIVGGTHGNERIGLYLVKKFNQDSSLLFRPNLTTNCLIGNPQACKENQRYIETDLNRCFIKADLDNHLLGRHEEKQAKVLHEQLGPKGNSENFLLDLHSTTANMGLTLILVNDHPFNLHLAAYLTHHNPQVRVYRWTQENQENAFVSSLCQLGFAIEVGPIPQGILLASLFKETETLIHQTLDYLEQVNRGASPPLPKTLTLFQHLEVVDYPKTSNGELAGMIHPQLQGRDYQPLNPGDPIFLTFEDQTLFYEGCSTVWPIFINEAAYYEKGIAMCLTHKQDISLK.

Positions 16 and 19 each coordinate Zn(2+). Residues Arg58 and 65 to 66 (NR) contribute to the substrate site. Residue His107 participates in Zn(2+) binding. 2 residues coordinate substrate: Glu166 and Tyr277.

It belongs to the AspA/AstE family. Aspartoacylase subfamily. Zn(2+) is required as a cofactor.

The catalysed reaction is an N-acyl-L-aspartate + H2O = a carboxylate + L-aspartate. This is Probable aspartoacylase from Acaryochloris marina (strain MBIC 11017).